Here is a 123-residue protein sequence, read N- to C-terminus: Small ribosomal subunit protein uS12c (123 aa).

Belongs to the universal ribosomal protein uS12 family. In terms of assembly, part of the 30S ribosomal subunit.

The protein resides in the plastid. The protein localises to the chloroplast. In terms of biological role, with S4 and S5 plays an important role in translational accuracy. Located at the interface of the 30S and 50S subunits. The polypeptide is Small ribosomal subunit protein uS12c (rps12) (Chlorella vulgaris (Green alga)).